We begin with the raw amino-acid sequence, 964 residues long: Glycine dehydrogenase (decarboxylating) (964 aa).

The span at 1–10 shows a compositional bias: polar residues; it reads MNSTLQNRNR. The interval 1-25 is disordered; that stretch reads MNSTLQNRNRTNLERVSTDPLDTFP. Position 713 is an N6-(pyridoxal phosphate)lysine (Lys713).

This sequence belongs to the GcvP family. The glycine cleavage system is composed of four proteins: P, T, L and H. The cofactor is pyridoxal 5'-phosphate.

The enzyme catalyses N(6)-[(R)-lipoyl]-L-lysyl-[glycine-cleavage complex H protein] + glycine + H(+) = N(6)-[(R)-S(8)-aminomethyldihydrolipoyl]-L-lysyl-[glycine-cleavage complex H protein] + CO2. In terms of biological role, the glycine cleavage system catalyzes the degradation of glycine. The P protein binds the alpha-amino group of glycine through its pyridoxal phosphate cofactor; CO(2) is released and the remaining methylamine moiety is then transferred to the lipoamide cofactor of the H protein. This chain is Glycine dehydrogenase (decarboxylating), found in Leptospira borgpetersenii serovar Hardjo-bovis (strain JB197).